We begin with the raw amino-acid sequence, 20 residues long: Lysozyme (20 aa).

As to quaternary structure, monomer.

It localises to the secreted. It carries out the reaction Hydrolysis of (1-&gt;4)-beta-linkages between N-acetylmuramic acid and N-acetyl-D-glucosamine residues in a peptidoglycan and between N-acetyl-D-glucosamine residues in chitodextrins.. Functionally, has bacteriolytic activity. This chain is Lysozyme, found in Lysobacter sp. (strain XL1).